The chain runs to 805 residues: Pentatricopeptide repeat-containing protein At4g01570 (805 aa).

PPR repeat units follow at residues 91-125 (SATA…GVNL), 126-160 (DQTM…GDCL), 161-196 (NPSV…DNHS), 211-241 (GTVA…LKGM), 247-277 (DTWS…MKER), 288-322 (DICT…GHEP), 323-357 (DNST…GFVP), 358-392 (DTIV…GVRA), 393-427 (SCWT…GQFV), 428-462 (DAIT…GFSV), 463-497 (DLVT…NLVP), 593-627 (DVDM…GVTD), 629-663 (TSYT…FCAA), 664-698 (DIAT…GGYL), 699-733 (DIVM…GINP), and 734-768 (DVVS…GCLP).

This sequence belongs to the PPR family. P subfamily.

In Arabidopsis thaliana (Mouse-ear cress), this protein is Pentatricopeptide repeat-containing protein At4g01570.